A 678-amino-acid polypeptide reads, in one-letter code: Pescadillo homolog (678 aa).

A compositionally biased stretch (acidic residues) spans Glu283–Pro303. Positions Glu283 to Ala316 are disordered. Residues Val361–Pro451 form the BRCT domain. The stretch at Met552–Thr587 forms a coiled coil. A disordered region spans residues Met563 to Arg678. Residues Lys564–Lys581 are compositionally biased toward basic and acidic residues. Composition is skewed to low complexity over residues Lys597–Ser618 and Ala630–Glu661. Residues Ala662–Pro672 show a composition bias toward basic and acidic residues.

This sequence belongs to the pescadillo family.

It localises to the nucleus. The protein resides in the nucleolus. The protein localises to the nucleoplasm. In terms of biological role, required for maturation of ribosomal RNAs and formation of the large ribosomal subunit. This Chlamydomonas reinhardtii (Chlamydomonas smithii) protein is Pescadillo homolog.